Consider the following 262-residue polypeptide: Phosphate import ATP-binding protein PstB (262 aa).

The ABC transporter domain maps to 15–257 (AKASNLNLWY…PQKSKTEQYI (243 aa)). Residue 47–54 (GPSGCGKS) participates in ATP binding.

Belongs to the ABC transporter superfamily. Phosphate importer (TC 3.A.1.7) family. The complex is composed of two ATP-binding proteins (PstB), two transmembrane proteins (PstC and PstA) and a solute-binding protein (PstS).

The protein resides in the cell inner membrane. It carries out the reaction phosphate(out) + ATP + H2O = ADP + 2 phosphate(in) + H(+). Functionally, part of the ABC transporter complex PstSACB involved in phosphate import. Responsible for energy coupling to the transport system. The protein is Phosphate import ATP-binding protein PstB of Wolinella succinogenes (strain ATCC 29543 / DSM 1740 / CCUG 13145 / JCM 31913 / LMG 7466 / NCTC 11488 / FDC 602W) (Vibrio succinogenes).